A 390-amino-acid chain; its full sequence is Succinate--CoA ligase [ADP-forming] subunit beta (390 aa).

An ATP-grasp domain is found at 9–245 (KHLLKKYNIP…TTQEDEHETM (237 aa)). Residues K46, 53-55 (GRG), E99, S102, and E107 each bind ATP. Residues N200 and D214 each coordinate Mg(2+). Residues N265 and 322 to 324 (GIV) contribute to the substrate site.

It belongs to the succinate/malate CoA ligase beta subunit family. Heterotetramer of two alpha and two beta subunits. It depends on Mg(2+) as a cofactor.

It carries out the reaction succinate + ATP + CoA = succinyl-CoA + ADP + phosphate. The enzyme catalyses GTP + succinate + CoA = succinyl-CoA + GDP + phosphate. It functions in the pathway carbohydrate metabolism; tricarboxylic acid cycle; succinate from succinyl-CoA (ligase route): step 1/1. Its function is as follows. Succinyl-CoA synthetase functions in the citric acid cycle (TCA), coupling the hydrolysis of succinyl-CoA to the synthesis of either ATP or GTP and thus represents the only step of substrate-level phosphorylation in the TCA. The beta subunit provides nucleotide specificity of the enzyme and binds the substrate succinate, while the binding sites for coenzyme A and phosphate are found in the alpha subunit. In Coxiella burnetii (strain CbuG_Q212) (Coxiella burnetii (strain Q212)), this protein is Succinate--CoA ligase [ADP-forming] subunit beta.